The primary structure comprises 191 residues: TATA-box-binding protein (191 aa).

2 consecutive repeat copies span residues 18-94 (LQNV…AKIV) and 108-185 (IQNI…YPVL).

This sequence belongs to the TBP family. As to quaternary structure, belongs to the TFIID complex together with the TBP-associated factors (TAFs). Binds DNA as monomer.

The protein resides in the nucleus. Its function is as follows. General transcription factor that functions at the core of the DNA-binding multiprotein factor TFIID. Binding of TFIID to the TATA box is the initial transcriptional step of the pre-initiation complex (PIC), playing a role in the activation of eukaryotic genes transcribed by RNA polymerase II. The polypeptide is TATA-box-binding protein (Acetabularia peniculus (Green alga)).